Consider the following 365-residue polypeptide: Endophilin-B1 (365 aa).

M1 carries the post-translational modification N-acetylmethionine. The membrane-binding amphipathic helix stretch occupies residues 1 to 30 (MNIMDFNVKKLAADAGTFLSRAVQFTEEKL). The segment at 1–37 (MNIMDFNVKKLAADAGTFLSRAVQFTEEKLGQAEKTE) is required for membrane binding. The region spanning 27 to 261 (EEKLGQAEKT…LGSFPSNYVS (235 aa)) is the BAR domain. Position 145 is a phosphothreonine; by CDK5 (T145). A coiled-coil region spans residues 156–185 (KTIAKERKLLQNKRLDLDAAKTRLKKAKAA). The region spanning 305-365 (SSTRKARVLY…VPITYLELLN (61 aa)) is the SH3 domain.

This sequence belongs to the endophilin family. In terms of assembly, homodimer, and heterodimer with SH3GLB2. Binds BAX; induction of apoptosis augments BAX binding. Binds DNM1, HTT, AMPH, BIN1 and ARFGAP1. Interacts with UVRAG; UVRAG bridges the interaction to BECN1 indicative for an association with the PI3K complex II (PI3KC3-C2). Post-translationally, phosphorylated at Thr-145 by CDK5; this phosphorylation is required for autophagy induction in starved neurons and facilitates homodimerization. Expressed in brain, heart, lung and spleen. Low level in liver and testis.

It localises to the cytoplasm. Its subcellular location is the golgi apparatus membrane. It is found in the mitochondrion outer membrane. The protein localises to the cytoplasmic vesicle. The protein resides in the autophagosome membrane. It localises to the midbody. Its function is as follows. May be required for normal outer mitochondrial membrane dynamics. Required for coatomer-mediated retrograde transport in certain cells. May recruit other proteins to membranes with high curvature. May promote membrane fusion. Involved in activation of caspase-dependent apoptosis by promoting BAX/BAK1 activation. Involved in caspase-independent apoptosis during nutrition starvation and involved in the regulation of autophagy. Activates lipid kinase activity of PIK3C3 during autophagy probably by associating with the PI3K complex II (PI3KC3-C2). Associated with PI3KC3-C2 during autophagy may regulate the trafficking of ATG9A from the Golgi complex to the peripheral cytoplasm for the formation of autophagosomes by inducing Golgi membrane tubulation and fragmentation. Involved in regulation of degradative endocytic trafficking and cytokinesis, probably in the context of PI3KC3-C2. The polypeptide is Endophilin-B1 (Rattus norvegicus (Rat)).